The primary structure comprises 395 residues: Chaperone protein DnaJ 2 (395 aa).

The 66-residue stretch at 10–75 (DYYADLGVSK…TKRREYDDLK (66 aa)) folds into the J domain. The segment at 165–242 (GTTIPVELTG…CRGRGTVRRT (78 aa)) adopts a CR-type zinc-finger fold. 8 residues coordinate Zn(2+): Cys-178, Cys-181, Cys-194, Cys-197, Cys-216, Cys-219, Cys-230, and Cys-233. CXXCXGXG motif repeat units lie at residues 178–185 (CNTCHGSG), 194–201 (CGQCNGSG), 216–223 (CTNCGGTG), and 230–237 (CVDCRGRG).

Belongs to the DnaJ family. Homodimer. Requires Zn(2+) as cofactor.

The protein localises to the cytoplasm. Participates actively in the response to hyperosmotic and heat shock by preventing the aggregation of stress-denatured proteins and by disaggregating proteins, also in an autonomous, DnaK-independent fashion. Unfolded proteins bind initially to DnaJ; upon interaction with the DnaJ-bound protein, DnaK hydrolyzes its bound ATP, resulting in the formation of a stable complex. GrpE releases ADP from DnaK; ATP binding to DnaK triggers the release of the substrate protein, thus completing the reaction cycle. Several rounds of ATP-dependent interactions between DnaJ, DnaK and GrpE are required for fully efficient folding. Also involved, together with DnaK and GrpE, in the DNA replication of plasmids through activation of initiation proteins. The protein is Chaperone protein DnaJ 2 of Corynebacterium efficiens (strain DSM 44549 / YS-314 / AJ 12310 / JCM 11189 / NBRC 100395).